Reading from the N-terminus, the 159-residue chain is Large ribosomal subunit protein eL29 (159 aa).

Positions 1 to 26 are enriched in basic residues; the sequence is MAKSKNHTTHNQSRKWHRNGIKKPRS. A disordered region spans residues 1-32; that stretch reads MAKSKNHTTHNQSRKWHRNGIKKPRSQRYESL. At Lys5 the chain carries N6-methyllysine. Ser31 carries the post-translational modification Phosphoserine. At Lys33 the chain carries N6-acetyllysine. Basic residues predominate over residues 117 to 127; that stretch reads RLCRPKAKAKA. Residues 117 to 159 form a disordered region; that stretch reads RLCRPKAKAKAKAKDQTKAQAAAPASVPAQAPKRTQAPTKASE. Residues 134–149 show a composition bias toward low complexity; the sequence is KAQAAAPASVPAQAPK. Residue Ser142 is modified to Phosphoserine.

It belongs to the eukaryotic ribosomal protein eL29 family. Component of the large ribosomal subunit.

The protein localises to the cytoplasm. In terms of biological role, component of the large ribosomal subunit. The ribosome is a large ribonucleoprotein complex responsible for the synthesis of proteins in the cell. The chain is Large ribosomal subunit protein eL29 (RPL29) from Homo sapiens (Human).